The following is a 230-amino-acid chain: ATP synthase subunit a (230 aa).

6 consecutive transmembrane segments (helical) span residues 16-36, 73-93, 106-126, 142-162, 165-185, and 192-212; these read LVLF…WLSI, WVSA…LGLL, TYSI…YLAF, LIPF…IALG, LAAN…AIWT, and IASI…GVAC.

It belongs to the ATPase A chain family. In terms of assembly, F-type ATPases have 2 components, CF(1) - the catalytic core - and CF(0) - the membrane proton channel. CF(1) has five subunits: alpha(3), beta(3), gamma(1), delta(1), epsilon(1). CF(0) has three main subunits: a, b and c.

It localises to the mitochondrion inner membrane. Mitochondrial membrane ATP synthase (F(1)F(0) ATP synthase or Complex V) produces ATP from ADP in the presence of a proton gradient across the membrane which is generated by electron transport complexes of the respiratory chain. F-type ATPases consist of two structural domains, F(1) - containing the extramembraneous catalytic core and F(0) - containing the membrane proton channel, linked together by a central stalk and a peripheral stalk. During catalysis, ATP synthesis in the catalytic domain of F(1) is coupled via a rotary mechanism of the central stalk subunits to proton translocation. Key component of the proton channel; it may play a direct role in the translocation of protons across the membrane. The protein is ATP synthase subunit a (ATP6) of Patiria pectinifera (Starfish).